The sequence spans 421 residues: Imidazolonepropionase (421 aa).

Fe(3+) is bound by residues histidine 81 and histidine 83. 2 residues coordinate Zn(2+): histidine 81 and histidine 83. 3 residues coordinate 4-imidazolone-5-propanoate: arginine 90, tyrosine 153, and histidine 186. Tyrosine 153 serves as a coordination point for N-formimidoyl-L-glutamate. Histidine 251 is a Fe(3+) binding site. Histidine 251 serves as a coordination point for Zn(2+). Residue glutamate 254 participates in 4-imidazolone-5-propanoate binding. Position 326 (aspartate 326) interacts with Fe(3+). Aspartate 326 serves as a coordination point for Zn(2+). Residues asparagine 328 and glycine 330 each contribute to the N-formimidoyl-L-glutamate site. Serine 331 serves as a coordination point for 4-imidazolone-5-propanoate.

This sequence belongs to the metallo-dependent hydrolases superfamily. HutI family. Zn(2+) is required as a cofactor. It depends on Fe(3+) as a cofactor.

The protein localises to the cytoplasm. It catalyses the reaction 4-imidazolone-5-propanoate + H2O = N-formimidoyl-L-glutamate. Its pathway is amino-acid degradation; L-histidine degradation into L-glutamate; N-formimidoyl-L-glutamate from L-histidine: step 3/3. Its function is as follows. Catalyzes the hydrolytic cleavage of the carbon-nitrogen bond in imidazolone-5-propanoate to yield N-formimidoyl-L-glutamate. It is the third step in the universal histidine degradation pathway. This chain is Imidazolonepropionase, found in Streptococcus gordonii (strain Challis / ATCC 35105 / BCRC 15272 / CH1 / DL1 / V288).